A 146-amino-acid polypeptide reads, in one-letter code: MMDINEIREYLPHRYPFLLVDRVVELDTEGKRIRAYKNVSINEPFFNGHFPAHPIMPGVLIIEAMAQAAGILGFKMLDVKPADGTLYYFVGSDKLRFRQPVLPGDQLILEAKFISCKRQIWKFECQASVDGKPVCSAEIICAERKL.

H49 is a catalytic residue.

It belongs to the thioester dehydratase family. FabZ subfamily.

The protein resides in the cytoplasm. It catalyses the reaction a (3R)-hydroxyacyl-[ACP] = a (2E)-enoyl-[ACP] + H2O. Its function is as follows. Involved in unsaturated fatty acids biosynthesis. Catalyzes the dehydration of short chain beta-hydroxyacyl-ACPs and long chain saturated and unsaturated beta-hydroxyacyl-ACPs. In Pseudomonas fluorescens (strain Pf0-1), this protein is 3-hydroxyacyl-[acyl-carrier-protein] dehydratase FabZ.